The primary structure comprises 339 residues: Undecaprenyl-phosphate 4-deoxy-4-formamido-L-arabinose transferase (339 aa).

A run of 2 helical transmembrane segments spans residues 235–255 (LSLV…FLLV) and 269–289 (LFVL…GMGL).

It belongs to the glycosyltransferase 2 family.

Its subcellular location is the cell inner membrane. It carries out the reaction UDP-4-deoxy-4-formamido-beta-L-arabinose + di-trans,octa-cis-undecaprenyl phosphate = 4-deoxy-4-formamido-alpha-L-arabinopyranosyl di-trans,octa-cis-undecaprenyl phosphate + UDP. The protein operates within glycolipid biosynthesis; 4-amino-4-deoxy-alpha-L-arabinose undecaprenyl phosphate biosynthesis; 4-amino-4-deoxy-alpha-L-arabinose undecaprenyl phosphate from UDP-4-deoxy-4-formamido-beta-L-arabinose and undecaprenyl phosphate: step 1/2. Its pathway is bacterial outer membrane biogenesis; lipopolysaccharide biosynthesis. In terms of biological role, catalyzes the transfer of 4-deoxy-4-formamido-L-arabinose from UDP to undecaprenyl phosphate. The modified arabinose is attached to lipid A and is required for resistance to polymyxin and cationic antimicrobial peptides. This is Undecaprenyl-phosphate 4-deoxy-4-formamido-L-arabinose transferase from Pseudomonas aeruginosa (strain UCBPP-PA14).